A 316-amino-acid polypeptide reads, in one-letter code: Acetyl-coenzyme A carboxylase carboxyl transferase subunit beta (316 aa).

The region spanning 39 to 308 (LWHKCSKCGV…TPPMVLWETM (270 aa)) is the CoA carboxyltransferase N-terminal domain. Zn(2+)-binding residues include cysteine 43, cysteine 46, cysteine 62, and cysteine 65. The segment at 43-65 (CSKCGVLTYTKDLRANQMVCVEC) adopts a C4-type zinc-finger fold.

The protein belongs to the AccD/PCCB family. As to quaternary structure, acetyl-CoA carboxylase is a heterohexamer composed of biotin carboxyl carrier protein (AccB), biotin carboxylase (AccC) and two subunits each of ACCase subunit alpha (AccA) and ACCase subunit beta (AccD). It depends on Zn(2+) as a cofactor.

It localises to the cytoplasm. The catalysed reaction is N(6)-carboxybiotinyl-L-lysyl-[protein] + acetyl-CoA = N(6)-biotinyl-L-lysyl-[protein] + malonyl-CoA. It participates in lipid metabolism; malonyl-CoA biosynthesis; malonyl-CoA from acetyl-CoA: step 1/1. Its function is as follows. Component of the acetyl coenzyme A carboxylase (ACC) complex. Biotin carboxylase (BC) catalyzes the carboxylation of biotin on its carrier protein (BCCP) and then the CO(2) group is transferred by the transcarboxylase to acetyl-CoA to form malonyl-CoA. This is Acetyl-coenzyme A carboxylase carboxyl transferase subunit beta from Trichormus variabilis (strain ATCC 29413 / PCC 7937) (Anabaena variabilis).